We begin with the raw amino-acid sequence, 371 residues long: Probable inactive methyltransferase Os04g0175900 (371 aa).

A substrate-binding site is contributed by 137–143; the sequence is LDVDEDN. The interval 170–188 is substrate binding; that stretch reads LFEYMGTNHRFNMLFNQAM. Positions 216, 239, 260, and 273 each coordinate S-adenosyl-L-methionine.

This sequence belongs to the class I-like SAM-binding methyltransferase superfamily. Cation-independent O-methyltransferase family. COMT subfamily.

The protein is Probable inactive methyltransferase Os04g0175900 of Oryza sativa subsp. japonica (Rice).